Here is a 375-residue protein sequence, read N- to C-terminus: DNA replication and repair protein RecF (375 aa).

34-41 (GDNGAGKT) contacts ATP.

It belongs to the RecF family.

It localises to the cytoplasm. Its function is as follows. The RecF protein is involved in DNA metabolism; it is required for DNA replication and normal SOS inducibility. RecF binds preferentially to single-stranded, linear DNA. It also seems to bind ATP. The chain is DNA replication and repair protein RecF from Rhizobium rhizogenes (strain K84 / ATCC BAA-868) (Agrobacterium radiobacter).